A 477-amino-acid chain; its full sequence is Ribulose bisphosphate carboxylase large chain (477 aa).

The propeptide occupies Met1–Ser2. N-acetylproline is present on Pro3. Lys14 carries the N6,N6,N6-trimethyllysine modification. Substrate is bound by residues Asn123 and Thr173. The Proton acceptor role is filled by Lys175. Residue Lys177 participates in substrate binding. Residues Lys201, Asp203, and Glu204 each coordinate Mg(2+). Lys201 bears the N6-carboxylysine mark. The active-site Proton acceptor is the His294. Substrate is bound by residues Arg295, His327, and Ser379.

It belongs to the RuBisCO large chain family. Type I subfamily. Heterohexadecamer of 8 large chains and 8 small chains; disulfide-linked. The disulfide link is formed within the large subunit homodimers. The cofactor is Mg(2+). In terms of processing, the disulfide bond which can form in the large chain dimeric partners within the hexadecamer appears to be associated with oxidative stress and protein turnover.

The protein resides in the plastid. The protein localises to the chloroplast. It catalyses the reaction 2 (2R)-3-phosphoglycerate + 2 H(+) = D-ribulose 1,5-bisphosphate + CO2 + H2O. It carries out the reaction D-ribulose 1,5-bisphosphate + O2 = 2-phosphoglycolate + (2R)-3-phosphoglycerate + 2 H(+). Its function is as follows. RuBisCO catalyzes two reactions: the carboxylation of D-ribulose 1,5-bisphosphate, the primary event in carbon dioxide fixation, as well as the oxidative fragmentation of the pentose substrate in the photorespiration process. Both reactions occur simultaneously and in competition at the same active site. The polypeptide is Ribulose bisphosphate carboxylase large chain (Dioscorea elephantipes (Elephant's foot yam)).